We begin with the raw amino-acid sequence, 91 residues long: Small ribosomal subunit protein uS15 (91 aa).

This sequence belongs to the universal ribosomal protein uS15 family. Part of the 30S ribosomal subunit. Forms a bridge to the 50S subunit in the 70S ribosome, contacting the 23S rRNA.

Its function is as follows. One of the primary rRNA binding proteins, it binds directly to 16S rRNA where it helps nucleate assembly of the platform of the 30S subunit by binding and bridging several RNA helices of the 16S rRNA. Functionally, forms an intersubunit bridge (bridge B4) with the 23S rRNA of the 50S subunit in the ribosome. This Synechococcus sp. (strain JA-3-3Ab) (Cyanobacteria bacterium Yellowstone A-Prime) protein is Small ribosomal subunit protein uS15.